Here is a 117-residue protein sequence, read N- to C-terminus: Large ribosomal subunit protein bL19 (117 aa).

The protein belongs to the bacterial ribosomal protein bL19 family.

This protein is located at the 30S-50S ribosomal subunit interface and may play a role in the structure and function of the aminoacyl-tRNA binding site. The protein is Large ribosomal subunit protein bL19 of Phocaeicola vulgatus (strain ATCC 8482 / DSM 1447 / JCM 5826 / CCUG 4940 / NBRC 14291 / NCTC 11154) (Bacteroides vulgatus).